A 357-amino-acid chain; its full sequence is Transcription factor PCF6 (357 aa).

The disordered stretch occupies residues 1-29 (MEAAVGDGEGGGGGGGRGKRGRGGGGGEM). Positions 7-16 (DGEGGGGGGG) are enriched in gly residues. Positions 52 to 110 (GKDRHSKVYTAKGIRDRRVRLSVATAIQFYDLQDRLGFDQPSKAIEWLINAASPAIDTL) constitute a TCP domain. Disordered stretches follow at residues 125–162 (AADAAPTRRRSQQQQQQLSNKSGCSSTSETSKGSDKEV) and 281–307 (ANRGTLQSNSPSNMSGHHHHHHQQQLQ). Composition is skewed to polar residues over residues 142–155 (LSNKSGCSSTSETS) and 284–295 (GTLQSNSPSNMS).

As to quaternary structure, forms homodimers and heterodimers.

Its subcellular location is the nucleus. Functionally, transcription activator. Binds the promoter core sequence 5'-GGNCC-3'. The chain is Transcription factor PCF6 (PCF6) from Oryza sativa subsp. japonica (Rice).